A 294-amino-acid polypeptide reads, in one-letter code: MEDYTKAEILIEALPYICKFHDQKFLIKYGGHAMVNEQARSWIAKDLVLLKYVGINPIVVHGGGPEINRAMEKMGKKPEFIHGLRVTDEETLDIVKMVLIGKINGDIVSKLERYGGKAVGLSGKSGQLIKAKKKIQYLMKDSQKIEVDLGMVGEVEHVDTKLIDILVEKRYIPVISPIGVDHQGNDLNLNADIAAGDIAGAMDAKKLIMVTDVDGIMDDVNDQSTLHRRLTISQIEDMIEKGLITGGMIPKIEACINALDKGVQSVHIVNGKTPHAVLLEIFTEDGVGTMIVRE.

Substrate-binding positions include 63–64 (GG), Arg-85, and Asn-188.

The protein belongs to the acetylglutamate kinase family. ArgB subfamily.

The protein localises to the cytoplasm. It carries out the reaction N-acetyl-L-glutamate + ATP = N-acetyl-L-glutamyl 5-phosphate + ADP. The protein operates within amino-acid biosynthesis; L-arginine biosynthesis; N(2)-acetyl-L-ornithine from L-glutamate: step 2/4. In terms of biological role, catalyzes the ATP-dependent phosphorylation of N-acetyl-L-glutamate. This is Acetylglutamate kinase from Methanococcus maripaludis (strain C5 / ATCC BAA-1333).